Consider the following 282-residue polypeptide: HTH-type transcriptional activator RhaR (282 aa).

One can recognise an HTH araC/xylS-type domain in the interval 179–277 (DKLITRLAAS…GMTPSQWRHL (99 aa)). 2 DNA-binding regions (H-T-H motif) span residues 196–217 (DKFC…RQQT) and 244–267 (ISDI…TRET).

As to quaternary structure, binds DNA as a dimer.

The protein localises to the cytoplasm. Functionally, activates expression of the rhaSR operon in response to L-rhamnose. The protein is HTH-type transcriptional activator RhaR of Shigella dysenteriae serotype 1 (strain Sd197).